Here is a 176-residue protein sequence, read N- to C-terminus: Ribosome rescue factor SmrB (176 aa).

The Smr domain occupies 93–168 (LDLHGYRQSE…GDAALLVLID (76 aa)).

This sequence belongs to the SmrB family. In terms of assembly, associates with collided ribosomes, but not with correctly translating polysomes.

In terms of biological role, acts as a ribosome collision sensor. Detects stalled/collided disomes (pairs of ribosomes where the leading ribosome is stalled and a second ribosome has collided with it) and endonucleolytically cleaves mRNA at the 5' boundary of the stalled ribosome. Stalled/collided disomes form a new interface (primarily via the 30S subunits) that binds SmrB. Cleaved mRNA becomes available for tmRNA ligation, leading to ribosomal subunit dissociation and rescue of stalled ribosomes. The protein is Ribosome rescue factor SmrB of Shewanella baltica (strain OS223).